The sequence spans 200 residues: NADH-quinone oxidoreductase subunit C (200 aa).

Belongs to the complex I 30 kDa subunit family. NDH-1 is composed of 14 different subunits. Subunits NuoB, C, D, E, F, and G constitute the peripheral sector of the complex.

The protein resides in the cell inner membrane. It carries out the reaction a quinone + NADH + 5 H(+)(in) = a quinol + NAD(+) + 4 H(+)(out). NDH-1 shuttles electrons from NADH, via FMN and iron-sulfur (Fe-S) centers, to quinones in the respiratory chain. The immediate electron acceptor for the enzyme in this species is believed to be ubiquinone. Couples the redox reaction to proton translocation (for every two electrons transferred, four hydrogen ions are translocated across the cytoplasmic membrane), and thus conserves the redox energy in a proton gradient. The sequence is that of NADH-quinone oxidoreductase subunit C from Burkholderia ambifaria (strain MC40-6).